Here is a 164-residue protein sequence, read N- to C-terminus: Probable metalloprotease y4qB (164 aa).

An MPN domain is found at 5 to 142; it reads IWIPESVVEA…WLPHAWIGQL (138 aa). Zn(2+) contacts are provided by H89, H91, and D103.

It belongs to the peptidase M67B family.

The protein is Probable metalloprotease y4qB of Sinorhizobium fredii (strain NBRC 101917 / NGR234).